Here is an 871-residue protein sequence, read N- to C-terminus: Dual O-methyltransferase/FAD-dependent monooxygenase CTB3 (871 aa).

Residues 1–429 are O-methyltransferase; the sequence is MMQFQRDLEA…GLLTVRSAGQ (429 aa). An S-adenosyl-L-methionine-binding site is contributed by aspartate 279. The Proton acceptor role is filled by histidine 331. The segment at 430-871 is FAD-dependent monooxygenase; the sequence is TALSGTNTLT…NLVDCSEFVF (442 aa). 3 residues coordinate FAD: glutamate 485, arginine 569, and alanine 806.

In the C-terminal section; belongs to the paxM FAD-dependent monooxygenase family. The protein in the N-terminal section; belongs to the class I-like SAM-binding methyltransferase superfamily. Cation-independent O-methyltransferase family. COMT subfamily.

The catalysed reaction is nor-toralactone + S-adenosyl-L-methionine = toralactone + S-adenosyl-L-homocysteine + H(+). The enzyme catalyses toralactone + NADH + O2 + H(+) = 1-(3,4,5-trihydroxy-7-methoxynaphthalen-2-yl)propan-2-one + CO2 + NAD(+). It participates in mycotoxin biosynthesis. Dual O-methyltransferase/FAD-dependent monooxygenase; part of the gene cluster that mediates the biosynthesis of cercosporin, a light-activated, non-host-selective toxin. The perylenequinone chromophore of cercosporin absorbs light energy to attain an electronically-activated triplet state and produces active oxygen species such as the hydroxyl radical, superoxide, hydrogen peroxide or singlet oxygen upon reaction with oxygen molecules. These reactive oxygen species cause damage to various cellular components including lipids, proteins and nucleic acids. The first step of cercosporin biosynthesis is performed by the polyketide synthase CTB1 which catalyzes the formation of nor-toralactone. The starter unit acyltransferase (SAT) domain of CTB1 initiates polyketide extension by the selective utilization of acetyl-CoA, which is elongated to the heptaketide in the beta-ketoacyl synthase (KS) domain by successive condensations with six malonyl units introduced by the malonyl acyltransferase (MAT) domain. The product template (PT) domain catalyzes C4-C9 and C2-C11 aldol cyclizations and dehydrations to a trihydroxynaphthalene, which is thought to be delivered to the thioesterase (TE) domain for product release. The bifunctional enzyme CTB3 then methylates nor-toralactone to toralactone before conducting an unusual oxidative aromatic ring opening. The O-methyltransferase CTB2 further methylates the nascent OH-6 of the CBT3 product, blocking further oxidation at this site before the reductase CTB6 reduces the 2-oxopropyl ketone at position C7, giving naphthalene. The FAD-dependent monooxygenase CTB5 in concert with the multicopper oxidase CTB12 are responsible for homodimerization of naphthalene with CTB7 installing the dioxepine moiety, finally producing cercosporin. The fasciclin domain-containing protein CTB11 might act with CTB5 and CTB12 whereas the roles of CTB9 and CTB10 have still to be elucidated. The polypeptide is Dual O-methyltransferase/FAD-dependent monooxygenase CTB3 (Cercospora nicotianae (Barn spot disease fungus)).